Consider the following 135-residue polypeptide: Small ribosomal subunit protein uS8 (135 aa).

This sequence belongs to the universal ribosomal protein uS8 family. As to quaternary structure, part of the 30S ribosomal subunit. Contacts proteins S5 and S12.

Functionally, one of the primary rRNA binding proteins, it binds directly to 16S rRNA central domain where it helps coordinate assembly of the platform of the 30S subunit. The polypeptide is Small ribosomal subunit protein uS8 (Nocardioides sp. (strain ATCC BAA-499 / JS614)).